Here is a 92-residue protein sequence, read N- to C-terminus: Long neurotoxin 73 (92 aa).

Residues 1–21 form the signal peptide; that stretch reads MKTLLLTLVVVTIVCLDLGDS. Cystine bridges form between Cys24–Cys41, Cys34–Cys62, Cys47–Cys51, Cys66–Cys77, and Cys78–Cys83.

Belongs to the three-finger toxin family. Long-chain subfamily. Type II alpha-neurotoxin sub-subfamily. As to expression, expressed by the venom gland.

The protein localises to the secreted. Functionally, binds with high affinity to muscular (alpha-1/CHRNA1) and neuronal (alpha-7/CHRNA7) nicotinic acetylcholine receptor (nAChR) and inhibits acetylcholine from binding to the receptor, thereby impairing neuromuscular and neuronal transmission. In Drysdalia coronoides (White-lipped snake), this protein is Long neurotoxin 73.